We begin with the raw amino-acid sequence, 938 residues long: MLEADAARLKTDRLGYNPLHVLRADAATRRQEPAILTMIRSSPPMSVDSSPLPEALRHAASISRFMRRMLDSRPWLAAQLAGSLGQPLDSEAMSSFLANRGVDEARLRASLRHLRSWVVCHVLTRDLNGFADLAEVTETMTVLAEVTVRATYEVLREGLVARYGAPLSPTGWEQELLVIGMGKLGGRELNVSSDIDLIFVYPEDGDTGGNKVISNFEFFERLGKQMIQALADVTEHGQVFRVDMRLRPNGDSGPLVCSFDMLENYFITQGREWERYAWIKARVLAGERYHELEQIARPFVFRKYLDFGSINAMRALHAQIRREVTRRDRVNNIKLGPGGIREIEFTAQVFQLIRGGREPGLQVRATLDVLAVLGERGILTPQTVGELAEAYDFLRRLEHRLQYLDDAQTHDLPGNDEDCECIARAMDFPDYTSFLGVLDHHRAAVSRHFDHVFGDPSEEAHTLDSMWAAARDVEQAEPILSRLGYGDPSGAAHRLAALHGSARYQQLPNHIRSRLDALMPRVVEVAAATPGPDETLARCIDLIEAISRRGAYLALLQQYPQALRRVADLVGASRWAAQYLTRHPILLDELLDDRNLEPAPDWDALRAQMRDTLDTLEPDMERQMDVMREQHHAQVFRLLTQDIAGLLTVEKLADHLSALADLMLELALPLVWRKIKIRHRDDPAFAVIAYGKLGGKELGYASDLDIVFLFDDPAPEALEVYTRLAQRINTWLSSQTAAGILFETDLRLRPNGESGLLVTSIESFRKYQLESAWVWEHQALTRARFAAGDATIGAAFERIRCEVLRLPRDIAALRAEVLAMRRKMSDAHAGKSERFNLKHDAGGLVDVEFLIQYLVLGHAHRYPELTGNLGNIALLRIAGELGLIPAELAARCGDSYRLFRRLQHRQRLNGLLSLVAPDEVAAAREPVRALWTIVFGSA.

The segment at 1–457 is adenylyl removase; the sequence is MLEADAARLK…HFDHVFGDPS (457 aa). An adenylyl transferase region spans residues 460-938; it reads AHTLDSMWAA…ALWTIVFGSA (479 aa).

It belongs to the GlnE family. Requires Mg(2+) as cofactor.

It catalyses the reaction [glutamine synthetase]-O(4)-(5'-adenylyl)-L-tyrosine + phosphate = [glutamine synthetase]-L-tyrosine + ADP. The enzyme catalyses [glutamine synthetase]-L-tyrosine + ATP = [glutamine synthetase]-O(4)-(5'-adenylyl)-L-tyrosine + diphosphate. Functionally, involved in the regulation of glutamine synthetase GlnA, a key enzyme in the process to assimilate ammonia. When cellular nitrogen levels are high, the C-terminal adenylyl transferase (AT) inactivates GlnA by covalent transfer of an adenylyl group from ATP to specific tyrosine residue of GlnA, thus reducing its activity. Conversely, when nitrogen levels are low, the N-terminal adenylyl removase (AR) activates GlnA by removing the adenylyl group by phosphorolysis, increasing its activity. The regulatory region of GlnE binds the signal transduction protein PII (GlnB) which indicates the nitrogen status of the cell. The chain is Bifunctional glutamine synthetase adenylyltransferase/adenylyl-removing enzyme from Aromatoleum aromaticum (strain DSM 19018 / LMG 30748 / EbN1) (Azoarcus sp. (strain EbN1)).